A 427-amino-acid polypeptide reads, in one-letter code: Glutamate-1-semialdehyde 2,1-aminomutase (427 aa).

At Lys-265 the chain carries N6-(pyridoxal phosphate)lysine.

Belongs to the class-III pyridoxal-phosphate-dependent aminotransferase family. HemL subfamily. Homodimer. Requires pyridoxal 5'-phosphate as cofactor.

It is found in the cytoplasm. It catalyses the reaction (S)-4-amino-5-oxopentanoate = 5-aminolevulinate. It functions in the pathway porphyrin-containing compound metabolism; protoporphyrin-IX biosynthesis; 5-aminolevulinate from L-glutamyl-tRNA(Glu): step 2/2. The protein is Glutamate-1-semialdehyde 2,1-aminomutase of Pseudomonas syringae pv. syringae (strain B728a).